A 561-amino-acid chain; its full sequence is PR domain zinc finger protein 14 (561 aa).

The interval 1–20 (MALPPSGETQSQDKANYLPQ) is disordered. Residues 7 to 20 (GETQSQDKANYLPQ) show a composition bias toward polar residues. Residues 184 to 373 (GFNFTEEELS…GVPMNLRVTE (190 aa)) form an interaction with CBFA2T2 region. Residues 241 to 356 (EGLCLMQTSF…RNQELLVWYG (116 aa)) enclose the SET domain. Y355 contributes to the S-adenosyl-L-methionine binding site. The C2H2-type 1; atypical zinc finger occupies 390–416 (YRCERCGKVFTYKYYRDKHLKYTPCVD). 5 consecutive C2H2-type zinc fingers follow at residues 422–445 (FPCS…LHVH), 451–473 (YLCS…MRVH), 479–501 (YQCV…IRQH), 507–530 (FKCK…RRSH), and 536–558 (SSCD…MRLH).

The protein belongs to the class V-like SAM-binding methyltransferase superfamily. Interacts with CBFA2T2. In terms of tissue distribution, restricted to embryonic stem cells and primordial germ cells. Not detected in epiblast-derived stem cells.

Its subcellular location is the nucleus. Transcription factor that has both positive and negative roles on transcription. Plays a role in cellular pluripotency. Essential for germ cell development at 2 levels: the reacquisition of potential pluripotency, including SOX2 up-regulation, and successful epigenetic reprogramming, characterized by EHMT1 repression. Its association with CBFA2T2 is required for the functions in pluripotency and germ cell formation. This is PR domain zinc finger protein 14 (Prdm14) from Mus musculus (Mouse).